We begin with the raw amino-acid sequence, 138 residues long: Large ribosomal subunit protein uL16 (138 aa).

Belongs to the universal ribosomal protein uL16 family. In terms of assembly, part of the 50S ribosomal subunit.

Binds 23S rRNA and is also seen to make contacts with the A and possibly P site tRNAs. This chain is Large ribosomal subunit protein uL16, found in Anaeromyxobacter dehalogenans (strain 2CP-C).